We begin with the raw amino-acid sequence, 250 residues long: Golgi SNAP receptor complex member 1 (250 aa).

Position 2 is an N-acetylalanine (A2). Residues 2–229 (AAGTSNYWED…QRINLRKRRD (228 aa)) lie on the Cytoplasmic side of the membrane. The stretch at 9–27 (WEDLRKQARQLENELDLKL) forms a coiled coil. The tract at residues 37–59 (YSHSGSRDGGRDRYSSDTTPLLN) is disordered. A compositionally biased stretch (basic and acidic residues) spans 41–51 (GSRDGGRDRYS). Positions 72–93 (IEIEQLLARLTGVNDKMAEYTH) form a coiled coil. S141 carries the phosphoserine modification. Residues 230–250 (SLILGGVIGICTILLLLYAFH) form a helical; Anchor for type IV membrane protein membrane-spanning segment.

This sequence belongs to the GOSR1 family. As to quaternary structure, component of several multiprotein Golgi SNARE complexes. Identified in a SNARE complex with BET1, STX5 and YKT6, in a SNARE complex with BET1L, STX5 and YKT6, in a SNARE complex with STX5, GOSR2, SEC22B and BET1, and in complex with STX5 and COG3. Interacts with GABARAPL2.

The protein localises to the golgi apparatus membrane. In terms of biological role, involved in transport from the ER to the Golgi apparatus as well as in intra-Golgi transport. It belongs to a super-family of proteins called t-SNAREs or soluble NSF (N-ethylmaleimide-sensitive factor) attachment protein receptor. May play a protective role against hydrogen peroxide induced cytotoxicity under glutathione depleted conditions in neuronal cells by regulating the intracellular ROS levels via inhibition of p38 MAPK (MAPK11, MAPK12, MAPK13 and MAPK14). Participates in docking and fusion stage of ER to cis-Golgi transport. Plays an important physiological role in VLDL-transport vesicle-Golgi fusion and thus in VLDL delivery to the hepatic cis-Golgi. The polypeptide is Golgi SNAP receptor complex member 1 (Gosr1) (Mus musculus (Mouse)).